Reading from the N-terminus, the 303-residue chain is Sulfate adenylyltransferase subunit 2 (303 aa).

This sequence belongs to the PAPS reductase family. CysD subfamily. Heterodimer composed of CysD, the smaller subunit, and CysN.

It carries out the reaction sulfate + ATP + H(+) = adenosine 5'-phosphosulfate + diphosphate. It participates in sulfur metabolism; hydrogen sulfide biosynthesis; sulfite from sulfate: step 1/3. In terms of biological role, with CysN forms the ATP sulfurylase (ATPS) that catalyzes the adenylation of sulfate producing adenosine 5'-phosphosulfate (APS) and diphosphate, the first enzymatic step in sulfur assimilation pathway. APS synthesis involves the formation of a high-energy phosphoric-sulfuric acid anhydride bond driven by GTP hydrolysis by CysN coupled to ATP hydrolysis by CysD. In Sulfurovum sp. (strain NBC37-1), this protein is Sulfate adenylyltransferase subunit 2.